The primary structure comprises 144 residues: Cytochrome c oxidase subunit 4 isoform 1, mitochondrial (144 aa).

Residues 1–73 are Mitochondrial matrix-facing; it reads SVVKSEDFSL…SFAEMNRGSN (73 aa). The residue at position 4 (K4) is an N6-acetyllysine; alternate. K4 bears the N6-succinyllysine; alternate mark. K28 is modified (N6-acetyllysine). Phosphoserine occurs at positions 31 and 33. An N6-acetyllysine; alternate modification is found at K35. Position 35 is an N6-succinyllysine; alternate (K35). K42 is modified (N6-acetyllysine). A helical transmembrane segment spans residues 74–99; sequence EWKTVVGGAMFFIGFTALIIMWQKRH. Residues 100–144 are Mitochondrial intermembrane-facing; that stretch reads VYGPLPQSFDKEWVAKQTKRMLDMKVNPIQGLASKWDYEKNEWKK.

This sequence belongs to the cytochrome c oxidase IV family. As to quaternary structure, component of the cytochrome c oxidase (complex IV, CIV), a multisubunit enzyme composed of 14 subunits. The complex is composed of a catalytic core of 3 subunits MT-CO1, MT-CO2 and MT-CO3, encoded in the mitochondrial DNA, and 11 supernumerary subunits COX4I, COX5A, COX5B, COX6A, COX6B, COX6C, COX7A, COX7B, COX7C, COX8 and NDUFA4, which are encoded in the nuclear genome. The complex exists as a monomer or a dimer and forms supercomplexes (SCs) in the inner mitochondrial membrane with NADH-ubiquinone oxidoreductase (complex I, CI) and ubiquinol-cytochrome c oxidoreductase (cytochrome b-c1 complex, complex III, CIII), resulting in different assemblies (supercomplex SCI(1)III(2)IV(1) and megacomplex MCI(2)III(2)IV(2)). Interacts with PHB2; the interaction decreases in absence of SPHK2. Interacts with AFG1L. Interacts with ABCB7; this interaction allows the regulation of cellular iron homeostasis and cellular reactive oxygen species (ROS) levels in cardiomyocytes. Interacts with FLVCR2; this interaction occurs in the absence of heme and is disrupted upon heme binding. Interacts with IRGC.

It localises to the mitochondrion inner membrane. The protein operates within energy metabolism; oxidative phosphorylation. In terms of biological role, component of the cytochrome c oxidase, the last enzyme in the mitochondrial electron transport chain which drives oxidative phosphorylation. The respiratory chain contains 3 multisubunit complexes succinate dehydrogenase (complex II, CII), ubiquinol-cytochrome c oxidoreductase (cytochrome b-c1 complex, complex III, CIII) and cytochrome c oxidase (complex IV, CIV), that cooperate to transfer electrons derived from NADH and succinate to molecular oxygen, creating an electrochemical gradient over the inner membrane that drives transmembrane transport and the ATP synthase. Cytochrome c oxidase is the component of the respiratory chain that catalyzes the reduction of oxygen to water. Electrons originating from reduced cytochrome c in the intermembrane space (IMS) are transferred via the dinuclear copper A center (CU(A)) of subunit 2 and heme A of subunit 1 to the active site in subunit 1, a binuclear center (BNC) formed by heme A3 and copper B (CU(B)). The BNC reduces molecular oxygen to 2 water molecules using 4 electrons from cytochrome c in the IMS and 4 protons from the mitochondrial matrix. The chain is Cytochrome c oxidase subunit 4 isoform 1, mitochondrial (COX4I1) from Pongo pygmaeus (Bornean orangutan).